Consider the following 161-residue polypeptide: Large ribosomal subunit protein uL15 (161 aa).

Residues 1–43 (MKLSDIADNAGSRKKRMRIGRGIGSGKGKTGGRGGKGQTARSG) are disordered. A compositionally biased stretch (gly residues) spans 21–37 (RGIGSGKGKTGGRGGKG).

Belongs to the universal ribosomal protein uL15 family. In terms of assembly, part of the 50S ribosomal subunit.

Functionally, binds to the 23S rRNA. This Nitrobacter hamburgensis (strain DSM 10229 / NCIMB 13809 / X14) protein is Large ribosomal subunit protein uL15.